The primary structure comprises 84 residues: Subtilisin-chymotrypsin inhibitor-2A (84 aa).

A disordered region spans residues 1–23; the sequence is MSSVEKKPEGVNTGAGDRHNLKT.

It belongs to the protease inhibitor I13 (potato type I serine protease inhibitor) family.

In terms of biological role, inhibits both subtilisin and chymotrypsin. This Hordeum vulgare (Barley) protein is Subtilisin-chymotrypsin inhibitor-2A.